Consider the following 180-residue polypeptide: Translation initiation factor IF-3 (180 aa).

It belongs to the IF-3 family. As to quaternary structure, monomer.

It is found in the cytoplasm. Its function is as follows. IF-3 binds to the 30S ribosomal subunit and shifts the equilibrium between 70S ribosomes and their 50S and 30S subunits in favor of the free subunits, thus enhancing the availability of 30S subunits on which protein synthesis initiation begins. This chain is Translation initiation factor IF-3, found in Escherichia coli (strain K12 / MC4100 / BW2952).